The following is a 476-amino-acid chain: Small ribosomal subunit protein mS29 (476 aa).

A mitochondrion-targeting transit peptide spans 1–54; the sequence is MLPKFRSRSSIIKNTERISNILSGGKLTVCGSKLGGLYTFEKCTFNKYYSSSQY. The tract at residues 58–97 is disordered; the sequence is GRPVGGNIHSSSNQQRQKNSEAPRINEIPPSTSSVEKSTT. Polar residues-rich tracts occupy residues 65–74 and 86–97; these read IHSSSNQQRQ and PPSTSSVEKSTT. 200–207 serves as a coordination point for ATP; the sequence is GAPGSGRS.

It belongs to the mitochondrion-specific ribosomal protein mS29 family. As to quaternary structure, component of the mitochondrial small ribosomal subunit (mt-SSU). Mature yeast 74S mitochondrial ribosomes consist of a small (37S) and a large (54S) subunit. The 37S small subunit contains a 15S ribosomal RNA (15S mt-rRNA) and at least 32 different proteins. The 54S large subunit contains a 21S rRNA (21S mt-rRNA) and at least 45 different proteins.

The protein localises to the mitochondrion. In terms of biological role, component of the mitochondrial ribosome (mitoribosome), a dedicated translation machinery responsible for the synthesis of mitochondrial genome-encoded proteins, including at least some of the essential transmembrane subunits of the mitochondrial respiratory chain. The mitoribosomes are attached to the mitochondrial inner membrane and translation products are cotranslationally integrated into the membrane. mS29 binds GTP and is probably an active GTPase. GTP hydrolysis may be linked to subunit association. mS29 also has an extraribosomal function, being required for maintenance of mitochondrial DNA. This is Small ribosomal subunit protein mS29 (rsm23) from Schizosaccharomyces pombe (strain 972 / ATCC 24843) (Fission yeast).